The following is a 562-amino-acid chain: Arginine--tRNA ligase (562 aa).

The short motif at 121–131 (PNIAKPFSVGH) is the 'HIGH' region element.

It belongs to the class-I aminoacyl-tRNA synthetase family. As to quaternary structure, monomer.

It localises to the cytoplasm. It catalyses the reaction tRNA(Arg) + L-arginine + ATP = L-arginyl-tRNA(Arg) + AMP + diphosphate. This Streptococcus suis (strain 98HAH33) protein is Arginine--tRNA ligase.